Here is a 213-residue protein sequence, read N- to C-terminus: MKCLFLLCLCLVPIVVFSSTFTSQNPINLPSDATPVLDVTGKELDPRLSYRIISIGRGALGGDVYLGKSPNSDAPCANGVFRFNSDVGPSGTPVRFIGSSSHFGPHIFEGELLNIQFDISTVKLCVSYTIWKVGDYDASLGTMLLETGGTIGQADSSWFKIVKSSQLGYNLLYCPFSSDDQFCLKVGVVHQNGKRRLALVKDNPLDVSFKQVQ.

The signal sequence occupies residues 1 to 22; it reads MKCLFLLCLCLVPIVVFSSTFT. Positions 23 to 28 are excised as a propeptide; sequence SQNPIN. The Vacuolar targeting signal motif lies at 25–30; that stretch reads NPINLP. 2 disulfides stabilise this stretch: Cys-76–Cys-125 and Cys-174–Cys-183.

It belongs to the protease inhibitor I3 (leguminous Kunitz-type inhibitor) family.

Its subcellular location is the vacuole. Its function is as follows. Inhibitor of trypsin (serine protease). Protects the plant by inhibiting proteases of invading organisms. In Solanum tuberosum (Potato), this protein is Serine protease inhibitor 5.